The primary structure comprises 264 residues: Apolipoprotein A-I (264 aa).

The N-terminal stretch at 1–18 is a signal peptide; it reads MKAVVLAVAVLFLTGSQA. Repeat copies occupy residues 67 to 88 and 89 to 110. Residues 67-264 are 10 X approximate tandem repeats; sequence LKLVDNWDTV…DETSKRLSTQ (198 aa). Methionine 109 bears the Methionine sulfoxide mark. The stretch at 111 to 121 is one 3; half-length repeat; sequence KDLEEVKKQVQ. Tandem repeats lie at residues 122–143, 144–165, and 166–187. The 7; truncated repeat unit spans residues 188 to 207; sequence PYSDKMRERLAQHLAKLKDS. Methionine 193 carries the methionine sulfoxide modification. Residues 208–229 form repeat 8; sequence TTLAEYRTKASNHLQTLSEKAK. Residues 230–240 form a 9; half-length repeat; sequence PALEDLRQGLT. Copy 10 of the repeat occupies 241–264; sequence PMLESFRATIMGWIDETSKRLSTQ. A Methionine sulfoxide modification is found at methionine 242.

This sequence belongs to the apolipoprotein A1/A4/E family. As to quaternary structure, homodimer. Interacts with APOA1BP and CLU. Component of a sperm activating protein complex (SPAP), consisting of APOA1, an immunoglobulin heavy chain, an immunoglobulin light chain and albumin. Interacts with NDRG1. Interacts with SCGB3A2. Interacts with NAXE and YJEFN3. In terms of processing, glycosylated. Post-translationally, palmitoylated. Phosphorylation sites are present in the extracellular medium.

The protein resides in the secreted. Participates in the reverse transport of cholesterol from tissues to the liver for excretion by promoting cholesterol efflux from tissues and by acting as a cofactor for the lecithin cholesterol acyltransferase (LCAT). As part of the SPAP complex, activates spermatozoa motility. This chain is Apolipoprotein A-I (Apoa1), found in Peromyscus maniculatus bairdii (Prairie deer mouse).